We begin with the raw amino-acid sequence, 505 residues long: Midnolin (505 aa).

In terms of domain architecture, Ubiquitin-like spans 32–106; sequence MSLAIHSTTG…LTLVPTVEAG (75 aa). 3 disordered regions span residues 155–176, 228–305, and 440–485; these read PWHR…VSDF, SIAT…SRKP, and RLRR…GLDF. Over residues 238–262 the composition is skewed to low complexity; sequence RPVSSAARVPPVSSSPSSPVSPSPV. The segment covering 263-282 has biased composition (polar residues); that stretch reads TAGTFQSHAASTTCPEQTDC. A compositionally biased stretch (low complexity) spans 283–300; it reads SPPASSNTTSTPGSSPTP.

Interacts with GCK; the interaction occurs preferentially at low glucose levels. Interacts with the proteasome.

The protein localises to the nucleus. It is found in the cytoplasm. It localises to the cytosol. Its subcellular location is the nucleolus. Functionally, facilitates the ubiquitin-independent proteasomal degradation of stimulus-induced transcription factors such as FOSB, EGR1, NR4A1, and IRF4 to the proteasome for degradation. Promotes also the degradation of other substrates such as CBX4. Plays a role in inhibiting the activity of glucokinase GCK and both glucose-induced and basal insulin secretion. The protein is Midnolin of Rattus norvegicus (Rat).